Here is a 290-residue protein sequence, read N- to C-terminus: Small ribosomal subunit biogenesis GTPase RsgA (290 aa).

The CP-type G domain occupies K62–L213. Residues S111–D114 and G156–T164 contribute to the GTP site. Positions 237, 242, 244, and 250 each coordinate Zn(2+).

Belongs to the TRAFAC class YlqF/YawG GTPase family. RsgA subfamily. In terms of assembly, monomer. Associates with 30S ribosomal subunit, binds 16S rRNA. Zn(2+) serves as cofactor.

It is found in the cytoplasm. One of several proteins that assist in the late maturation steps of the functional core of the 30S ribosomal subunit. Helps release RbfA from mature subunits. May play a role in the assembly of ribosomal proteins into the subunit. Circularly permuted GTPase that catalyzes slow GTP hydrolysis, GTPase activity is stimulated by the 30S ribosomal subunit. This Streptococcus mutans serotype c (strain ATCC 700610 / UA159) protein is Small ribosomal subunit biogenesis GTPase RsgA.